Reading from the N-terminus, the 511-residue chain is MGQGDESERIVINVGGTRHQTYRSTLRTLPGTRLAWLAEPDAHSHFDYDPRADEFFFDRHPGVFAHILNYYRTGKLHCPADVCGPLYEEELAFWGIDETDVEPCCWMTYRQHRDAEEALDSFGGAPLDNSADDADADGPGDSGDGEDELEMTKRLALSDSPDGRPGGFWRRWQPRIWALFEDPYSSRYARYVAFASLFFILVSITTFCLETHERFNPIVNKTEIENVRNGTQVRYYREAETEAFLTYIEGVCVVWFTFEFLMRVVFCPNKVEFIKNSLNIIDFVAILPFYLEVGLSGLSSKAAKDVLGFLRVVRFVRILRIFKLTRHFVGLRVLGHTLRASTNEFLLLIIFLALGVLIFATMIYYAERIGAQPNDPSASEHTHFKNIPIGFWWAVVTMTTLGYGDMYPQTWSGMLVGALCALAGVLTIAMPVPVIVNNFGMYYSLAMAKQKLPKKKKKHIPRPPQLGSPNYCKSVVNSPHHSTQSDTCPLAQEEILEINRAGRKPLRGMSI.

Residues 1–190 lie on the Cytoplasmic side of the membrane; it reads MGQGDESERI…EDPYSSRYAR (190 aa). Residue S44 is modified to Phosphoserine. Residues H77, C83, C104, and C105 each contribute to the Zn(2+) site. Residues 121 to 147 are disordered; that stretch reads SFGGAPLDNSADDADADGPGDSGDGED. 4 positions are modified to phosphoserine: S130, S142, S158, and S160. Acidic residues predominate over residues 130-147; it reads SADDADADGPGDSGDGED. A helical membrane pass occupies residues 191-209; sequence YVAFASLFFILVSITTFCL. N-linked (GlcNAc...) asparagine glycosylation is found at N220 and N229. The chain crosses the membrane as a helical span at residues 248-267; sequence IEGVCVVWFTFEFLMRVVFC. Residues 268–276 are Cytoplasmic-facing; that stretch reads PNKVEFIKN. A helical membrane pass occupies residues 277 to 295; sequence SLNIIDFVAILPFYLEVGL. The chain crosses the membrane as a helical; Voltage-sensor span at residues 309 to 331; the sequence is FLRVVRFVRILRIFKLTRHFVGL. Residues 332-344 lie on the Cytoplasmic side of the membrane; sequence RVLGHTLRASTNE. Residues 345–366 traverse the membrane as a helical segment; the sequence is FLLLIIFLALGVLIFATMIYYA. T400, L401, G402, and Y403 together coordinate K(+). The short motif at 400–405 is the Selectivity filter element; the sequence is TLGYGD. A helical transmembrane segment spans residues 415–436; the sequence is LVGALCALAGVLTIAMPVPVIV. Over 437 to 511 the chain is Cytoplasmic; it reads NNFGMYYSLA…GRKPLRGMSI (75 aa). S474 is subject to Phosphoserine. T483 bears the Phosphothreonine mark.

The protein belongs to the potassium channel family. C (Shaw) (TC 1.A.1.2) subfamily. Kv3.1/KCNC1 sub-subfamily. As to quaternary structure, homotetramer. Homomultimer. Heteromultimer with KCNG3, KCNG4 and KCNV2. Heteromultimer with KCNC2. Heterotetramer with KCNC3. Interacts with the ancillary subunits KCNE1 and KCNE2; the interaction modulates channel activity. N-glycosylated; contains sialylated glycans. As to expression, detected in cerebellum. Detected in brain (at protein level). Detected in brain.

Its subcellular location is the cell membrane. It localises to the cell projection. It is found in the axon. The protein resides in the presynaptic cell membrane. It carries out the reaction K(+)(in) = K(+)(out). Functionally, voltage-gated potassium channel that opens in response to the voltage difference across the membrane and through which potassium ions pass in accordance with their electrochemical gradient. The mechanism is time-dependent and inactivation is slow. Plays an important role in the rapid repolarization of fast-firing brain neurons. Can form functional homotetrameric channels and heterotetrameric channels that contain variable proportions of KCNC2, and possibly other family members as well. Contributes to fire sustained trains of very brief action potentials at high frequency in pallidal neurons. This is Voltage-gated potassium channel KCNC1 from Mus musculus (Mouse).